The sequence spans 154 residues: Putative nuclear shuttle protein (154 aa).

This sequence belongs to the nanoviridae nuclear shuttle protein family.

It localises to the host nucleus. Its subcellular location is the host cytoplasm. Functionally, putative nuclear shuttle protein. The chain is Putative nuclear shuttle protein (DNA-N) from Musa (BBTV).